The following is a 943-amino-acid chain: Protein translocase subunit SecA (943 aa).

Residues glutamine 90, 108–112, and aspartate 509 contribute to the ATP site; that span reads GEGKT. Residues 535 to 560 are disordered; the sequence is PNNEHKPPIPKQRSSKSKGGFSSKVG. The span at 551–560 shows a compositional bias: low complexity; sequence SKGGFSSKVG.

This sequence belongs to the SecA family. Monomer and homodimer. Part of the essential Sec protein translocation apparatus which comprises SecA, SecYEG and auxiliary proteins SecDF. Other proteins may also be involved.

The protein localises to the cell inner membrane. It is found in the cellular thylakoid membrane. The protein resides in the cytoplasm. The enzyme catalyses ATP + H2O + cellular proteinSide 1 = ADP + phosphate + cellular proteinSide 2.. Part of the Sec protein translocase complex. Interacts with the SecYEG preprotein conducting channel. Has a central role in coupling the hydrolysis of ATP to the transfer of proteins into and across the cell membrane, serving as an ATP-driven molecular motor driving the stepwise translocation of polypeptide chains across the membrane. In terms of biological role, probably participates in protein translocation into and across both the cytoplasmic and thylakoid membranes in cyanobacterial cells. This Prochlorococcus marinus (strain MIT 9312) protein is Protein translocase subunit SecA.